A 192-amino-acid chain; its full sequence is GTP cyclohydrolase 1 (192 aa).

3 residues coordinate Zn(2+): cysteine 81, histidine 84, and cysteine 153.

It belongs to the GTP cyclohydrolase I family. Toroid-shaped homodecamer, composed of two pentamers of five dimers.

The catalysed reaction is GTP + H2O = 7,8-dihydroneopterin 3'-triphosphate + formate + H(+). It participates in cofactor biosynthesis; 7,8-dihydroneopterin triphosphate biosynthesis; 7,8-dihydroneopterin triphosphate from GTP: step 1/1. The sequence is that of GTP cyclohydrolase 1 from Streptococcus mutans serotype c (strain ATCC 700610 / UA159).